The following is a 3284-amino-acid chain: Location of vulva defective 1 (3284 aa).

The N-terminal stretch at 1-21 is a signal peptide; that stretch reads MKKSNFFVLLLLAISAIQIDG. 5 disordered regions span residues 226–326, 350–505, 623–702, 827–926, and 1043–1216; these read ESTS…ITST, TTML…GTNP, VASS…ADST, STSE…ASTE, and TTTE…SLAT. Composition is skewed to low complexity over residues 227-326 and 350-500; these read STST…ITST and TTML…TTSS. Residues 827-913 show a composition bias toward low complexity; sequence STSEVTSTTS…PSDSSSASDS (87 aa). The span at 914 to 926 shows a compositional bias: polar residues; sequence MRTTTVDPDASTE. Low complexity predominate over residues 1043 to 1057; sequence TTTETPPTTVSSSDD. Positions 1060-1078 are enriched in gly residues; the sequence is GKTGGTGATGGTGGTGSGG. Residues 1079–1104 are compositionally biased toward low complexity; it reads SATTLSTGDAVRSTTSGSGSGQSSTG. The span at 1105-1127 shows a compositional bias: gly residues; sequence SGAGGSGTTASGSGSGGSSGTGS. Over residues 1128-1138 the composition is skewed to polar residues; sequence DGVNSGKTTAL. Low complexity predominate over residues 1163–1192; sequence GSGSDSNGSSGVSTKSSSGSDTSGSSDSSG. Residues 1197–1216 show a composition bias toward polar residues; it reads FSATAQPSTRTTKTRSSLAT. In terms of domain architecture, GAIN-B spans 2064–2227; the sequence is WNNSLQVEII…SVGAFNPTID (164 aa). C2181 and C2209 are oxidised to a cystine. The segment at 2181–2227 is GPS; that stretch reads CYFYQKTSDVFNSEGMYPSDGQGMQFVNCSTDHLTMFSVGAFNPTID. The chain crosses the membrane as a helical span at residues 2245 to 2265; it reads VMIAAVFMLVVYGCLTINAII. The PLAT domain occupies 2288–2411; it reads YMYVIAVETG…GDGETERLAR (124 aa). The next 10 helical transmembrane spans lie at 2453 to 2473, 2496 to 2516, 2557 to 2577, 2592 to 2612, 2672 to 2692, 2945 to 2965, 2994 to 3014, 3043 to 3063, 3089 to 3109, and 3144 to 3164; these read DYSV…ITIL, IAFG…HILL, IIVF…MSLM, LILW…FLIL, LFIT…MVML, MLYI…YLYG, WNFM…AYTI, WEIV…CKMI, FGIA…AVLG, and FAFV…LQLY.

The protein belongs to the polycystin family. As to quaternary structure, interacts (via PLAT domain) with atp-2 (via N-terminus) and with kin-10 (via C-terminus). Interacts (via C-terminus) with isoform a of stam-1/pqn-19 (via C-terminus). In terms of processing, autoproteolytically processed at the GPS region of the GAIN-B domain; this cleavage modulates receptor activity. In terms of tissue distribution, exclusively expressed in a subset of three categories of adult male sensory neurons: ray neurons, hook neurons and head cephalic (CEM) neurons.

Its subcellular location is the membrane. The protein resides in the cell projection. The protein localises to the cilium. Functionally, required for two aspects of male mating behavior: response to hermaphrodite contact and vulva location. Acts in the same pathway as pkd-2 and atp-2 in response behavior. May be required for ciliary targeting of pkd-2. The protein is Location of vulva defective 1 (lov-1) of Caenorhabditis elegans.